The following is a 59-amino-acid chain: Large ribosomal subunit protein uL30 (59 aa).

It belongs to the universal ribosomal protein uL30 family. Part of the 50S ribosomal subunit.

This chain is Large ribosomal subunit protein uL30, found in Sulfurihydrogenibium sp. (strain YO3AOP1).